The primary structure comprises 168 residues: Photosystem I assembly protein Ycf3 (168 aa).

TPR repeat units lie at residues 35-68 (AFTY…EIDP), 72-105 (SYIL…NPFL), and 120-153 (GEEA…TPGN).

Belongs to the Ycf3 family.

The protein resides in the plastid. Its subcellular location is the chloroplast thylakoid membrane. Essential for the assembly of the photosystem I (PSI) complex. May act as a chaperone-like factor to guide the assembly of the PSI subunits. This chain is Photosystem I assembly protein Ycf3, found in Nuphar advena (Common spatterdock).